The following is a 666-amino-acid chain: Threonine--tRNA ligase (666 aa).

Residues Gln7–Thr70 form the TGS domain. The segment at Asp253–Pro555 is catalytic. Zn(2+)-binding residues include Cys351, His402, and His532.

Belongs to the class-II aminoacyl-tRNA synthetase family. Homodimer. Zn(2+) is required as a cofactor.

Its subcellular location is the cytoplasm. It carries out the reaction tRNA(Thr) + L-threonine + ATP = L-threonyl-tRNA(Thr) + AMP + diphosphate + H(+). Catalyzes the attachment of threonine to tRNA(Thr) in a two-step reaction: L-threonine is first activated by ATP to form Thr-AMP and then transferred to the acceptor end of tRNA(Thr). Also edits incorrectly charged L-seryl-tRNA(Thr). The protein is Threonine--tRNA ligase of Chlorobium phaeovibrioides (strain DSM 265 / 1930) (Prosthecochloris vibrioformis (strain DSM 265)).